A 197-amino-acid polypeptide reads, in one-letter code: Alkyl hydroperoxide reductase C (197 aa).

The 162-residue stretch at 2–163 (VLVTQNAPNF…MIRMVDALDF (162 aa)) folds into the Thioredoxin domain. Cys50 serves as the catalytic Cysteine sulfenic acid (-SOH) intermediate.

It belongs to the peroxiredoxin family. AhpC/Prx1 subfamily. As to quaternary structure, homodimer; disulfide-linked, upon oxidation. 5 homodimers assemble to form a ring-like decamer.

It is found in the cytoplasm. The enzyme catalyses a hydroperoxide + NADH + H(+) = an alcohol + NAD(+) + H2O. In terms of biological role, thiol-specific peroxidase that catalyzes the reduction of hydrogen peroxide and organic hydroperoxides to water and alcohols, respectively. Plays a role in cell protection against oxidative stress by detoxifying peroxides. This Buchnera aphidicola subsp. Acyrthosiphon pisum (strain APS) (Acyrthosiphon pisum symbiotic bacterium) protein is Alkyl hydroperoxide reductase C.